The primary structure comprises 363 residues: UDP-N-acetylglucosamine--N-acetylmuramyl-(pentapeptide) pyrophosphoryl-undecaprenol N-acetylglucosamine transferase (363 aa).

UDP-N-acetyl-alpha-D-glucosamine contacts are provided by residues 14–16 (TGG), asparagine 122, arginine 163, serine 190, and glutamine 285.

The protein belongs to the glycosyltransferase 28 family. MurG subfamily.

Its subcellular location is the cell inner membrane. The catalysed reaction is di-trans,octa-cis-undecaprenyl diphospho-N-acetyl-alpha-D-muramoyl-L-alanyl-D-glutamyl-meso-2,6-diaminopimeloyl-D-alanyl-D-alanine + UDP-N-acetyl-alpha-D-glucosamine = di-trans,octa-cis-undecaprenyl diphospho-[N-acetyl-alpha-D-glucosaminyl-(1-&gt;4)]-N-acetyl-alpha-D-muramoyl-L-alanyl-D-glutamyl-meso-2,6-diaminopimeloyl-D-alanyl-D-alanine + UDP + H(+). The protein operates within cell wall biogenesis; peptidoglycan biosynthesis. In terms of biological role, cell wall formation. Catalyzes the transfer of a GlcNAc subunit on undecaprenyl-pyrophosphoryl-MurNAc-pentapeptide (lipid intermediate I) to form undecaprenyl-pyrophosphoryl-MurNAc-(pentapeptide)GlcNAc (lipid intermediate II). The polypeptide is UDP-N-acetylglucosamine--N-acetylmuramyl-(pentapeptide) pyrophosphoryl-undecaprenol N-acetylglucosamine transferase (Prochlorococcus marinus (strain MIT 9312)).